A 761-amino-acid chain; its full sequence is Protein transport protein SEC23 C (761 aa).

Zn(2+)-binding residues include cysteine 60, cysteine 63, cysteine 82, and cysteine 85. Residues 60-85 (CRTCRSVLNPYSVVDFSACNWGCPFC) form a zinc finger-like region.

It belongs to the SEC23/SEC24 family. SEC24 subfamily. In terms of assembly, component of the coat protein complex II (COPII), composed of at least five proteins: the Sec23/24 complex, the Sec13/31 complex and Sar1.

It is found in the cytoplasmic vesicle. It localises to the COPII-coated vesicle membrane. The protein localises to the endoplasmic reticulum membrane. Its subcellular location is the membrane. Its function is as follows. Component of the coat protein complex II (COPII) which promotes the formation of transport vesicles from the endoplasmic reticulum (ER). The coat has two main functions, the physical deformation of the endoplasmic reticulum membrane into vesicles and the selection of cargo molecules. In Arabidopsis thaliana (Mouse-ear cress), this protein is Protein transport protein SEC23 C.